Here is a 230-residue protein sequence, read N- to C-terminus: 3,4-dihydroxy-2-butanone 4-phosphate synthase (230 aa).

D-ribulose 5-phosphate is bound by residues 38–39 (RE), Asp43, 151–155 (RRGHT), and Glu175. Mg(2+) is bound at residue Glu39. His154 serves as a coordination point for Mg(2+).

Belongs to the DHBP synthase family. Homodimer. The cofactor is Mg(2+). It depends on Mn(2+) as a cofactor.

It catalyses the reaction D-ribulose 5-phosphate = (2S)-2-hydroxy-3-oxobutyl phosphate + formate + H(+). Its pathway is cofactor biosynthesis; riboflavin biosynthesis; 2-hydroxy-3-oxobutyl phosphate from D-ribulose 5-phosphate: step 1/1. In terms of biological role, catalyzes the conversion of D-ribulose 5-phosphate to formate and 3,4-dihydroxy-2-butanone 4-phosphate. In Vibrio harveyi (Beneckea harveyi), this protein is 3,4-dihydroxy-2-butanone 4-phosphate synthase.